The primary structure comprises 273 residues: 4-hydroxy-tetrahydrodipicolinate reductase (273 aa).

Residue 12–17 (GANGRM) participates in NAD(+) binding. Arginine 39 contacts NADP(+). Residues 102-104 (GTT) and 126-129 (AANF) each bind NAD(+). The active-site Proton donor/acceptor is the histidine 159. Histidine 160 lines the (S)-2,3,4,5-tetrahydrodipicolinate pocket. The active-site Proton donor is lysine 163. 169-170 (GT) serves as a coordination point for (S)-2,3,4,5-tetrahydrodipicolinate.

This sequence belongs to the DapB family. In terms of assembly, homotetramer.

It is found in the cytoplasm. It carries out the reaction (S)-2,3,4,5-tetrahydrodipicolinate + NAD(+) + H2O = (2S,4S)-4-hydroxy-2,3,4,5-tetrahydrodipicolinate + NADH + H(+). It catalyses the reaction (S)-2,3,4,5-tetrahydrodipicolinate + NADP(+) + H2O = (2S,4S)-4-hydroxy-2,3,4,5-tetrahydrodipicolinate + NADPH + H(+). The protein operates within amino-acid biosynthesis; L-lysine biosynthesis via DAP pathway; (S)-tetrahydrodipicolinate from L-aspartate: step 4/4. In terms of biological role, catalyzes the conversion of 4-hydroxy-tetrahydrodipicolinate (HTPA) to tetrahydrodipicolinate. This chain is 4-hydroxy-tetrahydrodipicolinate reductase, found in Cronobacter sakazakii (strain ATCC BAA-894) (Enterobacter sakazakii).